A 1330-amino-acid polypeptide reads, in one-letter code: ABC multidrug transporter mdr4 (1330 aa).

N-linked (GlcNAc...) asparagine glycosylation is present at Asn-3. 6 consecutive transmembrane segments (helical) span residues 90–110 (VLLI…FPLL), 144–164 (VLYV…HSTC), 218–238 (KVGL…VAFI), 243–263 (IAGM…GGGH), 324–344 (HAAQ…LAFW), and 370–390 (IFVL…IHVF). An ABC transmembrane type-1 1 domain is found at 94–392 (IGGLLFAICA…VAPFIHVFAS (299 aa)). In terms of domain architecture, ABC transporter 1 spans 428–666 (IRFRDVHFKY…GGVYAEMVRL (239 aa)). 463-470 (GPSGGGKS) is an ATP binding site. Asn-707 carries N-linked (GlcNAc...) asparagine glycosylation. Residues 717 to 736 (VADTPSDSRDGSEEEARKKR) are disordered. Residues 722–733 (SDSRDGSEEEAR) are compositionally biased toward basic and acidic residues. 6 consecutive transmembrane segments (helical) span residues 761 to 781 (LLGL…AIVF), 806 to 826 (LLFF…GCAF), 871 to 893 (ASAL…VNLI), 903 to 923 (AWKI…SGMM), 989 to 1009 (AWLA…YWWG), and 1023 to 1043 (FFIV…MFAL). One can recognise an ABC transmembrane type-1 2 domain in the interval 761–1049 (LLGLAMSVII…MFALAPDISK (289 aa)). The ABC transporter 2 domain maps to 1086-1325 (AQLRDVHFTY…SETYRTSVIH (240 aa)). 1121 to 1128 (GPSGSGKS) serves as a coordination point for ATP.

The protein belongs to the ABC transporter superfamily. ABCB family. Multidrug resistance exporter (TC 3.A.1.201) subfamily.

The protein localises to the cell membrane. It catalyses the reaction itraconazole(in) + ATP + H2O = itraconazole(out) + ADP + phosphate + H(+). The enzyme catalyses voriconazole(in) + ATP + H2O = voriconazole(out) + ADP + phosphate + H(+). Functionally, pleiotropic ABC efflux transporter that confers resistance to azoles such as itraconazole and voriconazole. The sequence is that of ABC multidrug transporter mdr4 from Aspergillus fumigatus (strain ATCC MYA-4609 / CBS 101355 / FGSC A1100 / Af293) (Neosartorya fumigata).